Consider the following 276-residue polypeptide: MGKLALAAKITHVPSMYLSELPGKNHGCRQGAIDGHKEISKRCREMGVDTIIVFDTHWLVNSAYHINCADHFEGVYTSNELPHFIRDMTYNYEGNPELGQLIADEALKLGVRAKAHNIPSLKLEYGSVVPMRYMNEDKRFKVVSISAFCTVHDFADSRKLGERIVKAIEQYDGTVAVLASGSLSHRFIDDQRAEEGMNSYTREFDRQMDERVVKLWREGQFKEFCNMLPEYADYCYGEGNMHDTVMLLGMLGWDKYDGKVWSLSPSYSQASWHRSG.

Fe cation serves as cofactor.

The enzyme catalyses 3,4-dihydroxyphenylacetate + O2 = 2-hydroxy-5-carboxymethylmuconate semialdehyde + H(+). It participates in aromatic compound metabolism; 4-hydroxyphenylacetate degradation; pyruvate and succinate semialdehyde from 4-hydroxyphenylacetate: step 2/7. Transforms homoprotocatechuic acid (HPC) into 5-carboxymethyl-2-hydroxy-muconic semialdehyde (CHMS). The protein is 3,4-dihydroxyphenylacetate 2,3-dioxygenase (hpcB) of Escherichia coli.